The sequence spans 202 residues: Methylthioribulose-1-phosphate dehydratase (202 aa).

Zn(2+) is bound by residues histidine 93 and histidine 95.

The protein belongs to the aldolase class II family. MtnB subfamily. Zn(2+) is required as a cofactor.

The enzyme catalyses 5-(methylsulfanyl)-D-ribulose 1-phosphate = 5-methylsulfanyl-2,3-dioxopentyl phosphate + H2O. It functions in the pathway amino-acid biosynthesis; L-methionine biosynthesis via salvage pathway; L-methionine from S-methyl-5-thio-alpha-D-ribose 1-phosphate: step 2/6. In terms of biological role, catalyzes the dehydration of methylthioribulose-1-phosphate (MTRu-1-P) into 2,3-diketo-5-methylthiopentyl-1-phosphate (DK-MTP-1-P). This chain is Methylthioribulose-1-phosphate dehydratase, found in Klebsiella pneumoniae subsp. pneumoniae (strain ATCC 700721 / MGH 78578).